The chain runs to 294 residues: Ribosomal protein L11 methyltransferase (294 aa).

S-adenosyl-L-methionine is bound by residues threonine 146, glycine 167, aspartate 189, and asparagine 231.

This sequence belongs to the methyltransferase superfamily. PrmA family.

Its subcellular location is the cytoplasm. The enzyme catalyses L-lysyl-[protein] + 3 S-adenosyl-L-methionine = N(6),N(6),N(6)-trimethyl-L-lysyl-[protein] + 3 S-adenosyl-L-homocysteine + 3 H(+). Functionally, methylates ribosomal protein L11. The polypeptide is Ribosomal protein L11 methyltransferase (Photobacterium profundum (strain SS9)).